The sequence spans 63 residues: Large ribosomal subunit protein uL29 (63 aa).

This sequence belongs to the universal ribosomal protein uL29 family.

The sequence is that of Large ribosomal subunit protein uL29 from Shewanella frigidimarina (strain NCIMB 400).